Here is a 179-residue protein sequence, read N- to C-terminus: tRNA (cytidine(56)-2'-O)-methyltransferase (179 aa).

S-adenosyl-L-methionine-binding positions include L82, 110 to 114 (GAEKV), and 128 to 135 (VGNQPHSE).

Belongs to the aTrm56 family. In terms of assembly, homodimer.

The protein resides in the cytoplasm. The enzyme catalyses cytidine(56) in tRNA + S-adenosyl-L-methionine = 2'-O-methylcytidine(56) in tRNA + S-adenosyl-L-homocysteine + H(+). Its function is as follows. Specifically catalyzes the AdoMet-dependent 2'-O-ribose methylation of cytidine at position 56 in tRNAs. This chain is tRNA (cytidine(56)-2'-O)-methyltransferase, found in Methanocaldococcus jannaschii (strain ATCC 43067 / DSM 2661 / JAL-1 / JCM 10045 / NBRC 100440) (Methanococcus jannaschii).